The chain runs to 475 residues: Ribulose bisphosphate carboxylase large chain (475 aa).

The propeptide occupies 1-2 (MV). Pro-3 carries the N-acetylproline modification. Position 14 is an N6,N6,N6-trimethyllysine (Lys-14). Residues Asn-123 and Thr-173 each coordinate substrate. Residue Lys-175 is the Proton acceptor of the active site. Lys-177 serves as a coordination point for substrate. Positions 201, 203, and 204 each coordinate Mg(2+). An N6-carboxylysine modification is found at Lys-201. The active-site Proton acceptor is His-294. The substrate site is built by Arg-295, His-327, and Ser-379.

Belongs to the RuBisCO large chain family. Type I subfamily. In terms of assembly, heterohexadecamer of 8 large chains and 8 small chains. The cofactor is Mg(2+).

Its subcellular location is the plastid. The protein resides in the chloroplast. It catalyses the reaction 2 (2R)-3-phosphoglycerate + 2 H(+) = D-ribulose 1,5-bisphosphate + CO2 + H2O. The catalysed reaction is D-ribulose 1,5-bisphosphate + O2 = 2-phosphoglycolate + (2R)-3-phosphoglycerate + 2 H(+). Its function is as follows. RuBisCO catalyzes two reactions: the carboxylation of D-ribulose 1,5-bisphosphate, the primary event in carbon dioxide fixation, as well as the oxidative fragmentation of the pentose substrate in the photorespiration process. Both reactions occur simultaneously and in competition at the same active site. The polypeptide is Ribulose bisphosphate carboxylase large chain (Stigeoclonium helveticum (Green alga)).